The chain runs to 932 residues: Lon protease homolog 2, peroxisomal (932 aa).

A Lon N-terminal domain is found at L11–V259. Residues T304–P340 are disordered. Over residues E328–P340 the composition is skewed to basic and acidic residues. Residue G486–T493 participates in ATP binding. A Lon proteolytic domain is found at H729–G916. Active-site residues include S822 and K865. Positions S930–L932 match the Microbody targeting signal motif.

This sequence belongs to the peptidase S16 family.

It is found in the peroxisome matrix. It catalyses the reaction Hydrolysis of proteins in presence of ATP.. ATP-dependent serine protease that mediates the selective degradation of misfolded and unassembled polypeptides in the peroxisomal matrix. Necessary for type 2 peroxisome targeting signal (PTS2)-containing protein processing and facilitates peroxisome matrix protein import. This Aspergillus fumigatus (strain ATCC MYA-4609 / CBS 101355 / FGSC A1100 / Af293) (Neosartorya fumigata) protein is Lon protease homolog 2, peroxisomal.